A 270-amino-acid polypeptide reads, in one-letter code: Phosphatidylglycerol--prolipoprotein diacylglyceryl transferase (270 aa).

Transmembrane regions (helical) follow at residues 10-30 (VAVA…LVGI), 56-76 (LIFW…VLFY), 92-112 (WKGG…AWWF), 120-140 (FFQL…AGRI), 175-195 (SQLY…NLYA), 202-222 (MAVS…VEFV), and 237-257 (VTMG…LIWL). R139 is a binding site for a 1,2-diacyl-sn-glycero-3-phospho-(1'-sn-glycerol).

The protein belongs to the Lgt family.

It localises to the cell inner membrane. The catalysed reaction is L-cysteinyl-[prolipoprotein] + a 1,2-diacyl-sn-glycero-3-phospho-(1'-sn-glycerol) = an S-1,2-diacyl-sn-glyceryl-L-cysteinyl-[prolipoprotein] + sn-glycerol 1-phosphate + H(+). Its pathway is protein modification; lipoprotein biosynthesis (diacylglyceryl transfer). Its function is as follows. Catalyzes the transfer of the diacylglyceryl group from phosphatidylglycerol to the sulfhydryl group of the N-terminal cysteine of a prolipoprotein, the first step in the formation of mature lipoproteins. The protein is Phosphatidylglycerol--prolipoprotein diacylglyceryl transferase of Pseudomonas syringae pv. tomato (strain ATCC BAA-871 / DC3000).